We begin with the raw amino-acid sequence, 1270 residues long: Myosin-1 (1270 aa).

The interval 1–40 (MGHSRRPAGGEKKSRGFGRSKAAADVGDGRQAGKPQVKKA) is disordered. One can recognise a Myosin motor domain in the interval 50-729 (IGVSDLTLLS…TLFALETMRD (680 aa)). An ATP-binding site is contributed by 143–150 (GESGAGKT). Ser-371 bears the Phosphoserine mark. Residues 418–500 (SIGILDIYGF…PGVFAALNDA (83 aa)) form an actin-binding region. IQ domains lie at 733 to 753 (HNMAIRIQRAWRNYLRYRIEC) and 754 to 779 (AIRIQRFWRRMTGGLEFIKLRDQGHQ). A TH1 domain is found at 787–980 (RRRMSLLGSR…TIHTSAGEPP (194 aa)). Disordered regions lie at residues 960 to 1102 (GASN…VLYD) and 1144 to 1270 (PEAY…DDEW). Over residues 963 to 974 (NVDSYKSSTIHT) the composition is skewed to polar residues. The span at 1023 to 1058 (ARQPMPQPTPQPAAVQPPPAPRPAVSPAAQPRPVPQ) shows a compositional bias: pro residues. Low complexity predominate over residues 1059–1078 (PVAAVAAAQHTRNASSSSTR). The span at 1079-1088 (APPPPPPATP) shows a compositional bias: pro residues. Positions 1092 to 1153 (QRKPMAKVLY…PEAYLEEQVA (62 aa)) constitute an SH3 domain. A compositionally biased stretch (pro residues) spans 1157–1167 (KPAPPPPPPAA). Composition is skewed to low complexity over residues 1168-1186 (PRASPVPATNGAAAAVAAK) and 1238-1252 (NSASNASLAGGLAEA).

This sequence belongs to the TRAFAC class myosin-kinesin ATPase superfamily. Myosin family. Phosphorylation of the TEDS site (Ser-371) is required for the polarization of the actin cytoskeleton. Phosphorylation probably activates the myosin-I ATPase activity.

Its subcellular location is the cytoplasm. It is found in the cytoskeleton. It localises to the actin patch. Type-I myosin implicated in the organization of the actin cytoskeleton. Required for proper actin cytoskeleton polarization. At the cell cortex, assembles in patch-like structures together with proteins from the actin-polymerizing machinery and promotes actin assembly. Functions as actin nucleation-promoting factor (NPF) for the Arp2/3 complex. Plays an important role in polarized growth, spore germination, hyphal morphogenesis, and septal wall formation. The protein is Myosin-1 (myoA) of Aspergillus niger (strain ATCC MYA-4892 / CBS 513.88 / FGSC A1513).